Here is a 520-residue protein sequence, read N- to C-terminus: Keratin, type II cytoskeletal 78 (520 aa).

Positions 1-110 (MSLSPCRAQR…DPQFQVVRTQ (110 aa)) are head. The tract at residues 111 to 146 (ETQEIRTLNNQFASFIDKVRFLEQQNKVLETKWHLL) is coil 1A. The 314-residue stretch at 111 to 424 (ETQEIRTLNN…RLLEGEECRM (314 aa)) folds into the IF rod domain. The tract at residues 147-165 (QQQGLSGSQQGLEPVFEAC) is linker 1. The coil 1B stretch occupies residues 166–258 (LDQLRKQLEQ…LNEEELGQLQ (93 aa)). The interval 259-281 (TQASDTSVVLSMDNNRYLDFSSI) is linker 12. A coil 2 region spans residues 282-421 (ITEVRARYEE…TYRRLLEGEE (140 aa)). Residues 422 to 520 (CRMSGECTSQ…ESSLKTSITY (99 aa)) form a tail region.

Belongs to the intermediate filament family. Heterotetramer of two type I and two type II keratins. In non-keratinising esophageal and vaginal epithelium, strongly expressed in the basal and parabasal/lower suprabasal cell layers with considerably decreased expression in the mid/upper suprabasal layers (at protein level). A similar gradient from basal to lower suprabasal layers is seen in the partially keratinised dorsal tongue epithelium, in the scalp and in the plantar epidermis (at protein level). Extension of expression into the suprabasal compartments is distinctly more pronounced in non-keratinising epithelia than in keratinising epithelia and epidermis (at protein level). In scalp sections, present in the interfollicular epidermis and infundibulum including the entire outer root sheath of the hair follicles and also in the sebocytes (at protein level). In sweat glands, expressed in peripheral and luminal cells of the lower duct and in peripheral cells of the middle/upper duct with no expression observed in luminal cells (at protein level). In embryos at the 14th week of pregnancy, detected in basal and parabasal layers but is absent from the uppermost epidermal layer (at protein level). Expressed in tongue epithelium.

In Homo sapiens (Human), this protein is Keratin, type II cytoskeletal 78 (KRT78).